We begin with the raw amino-acid sequence, 239 residues long: Uridylate kinase (239 aa).

Position 10–13 (K10–G13) interacts with ATP. The involved in allosteric activation by GTP stretch occupies residues G18–G23. G52 serves as a coordination point for UMP. ATP contacts are provided by G53 and R57. Residues D72 and T133–T140 contribute to the UMP site. ATP contacts are provided by T160, Y166, and D169.

The protein belongs to the UMP kinase family. Homohexamer.

It is found in the cytoplasm. It carries out the reaction UMP + ATP = UDP + ADP. The protein operates within pyrimidine metabolism; CTP biosynthesis via de novo pathway; UDP from UMP (UMPK route): step 1/1. Allosterically activated by GTP. Inhibited by UTP. In terms of biological role, catalyzes the reversible phosphorylation of UMP to UDP. In Chlorobaculum tepidum (strain ATCC 49652 / DSM 12025 / NBRC 103806 / TLS) (Chlorobium tepidum), this protein is Uridylate kinase.